The primary structure comprises 349 residues: Ion-translocating oxidoreductase complex subunit D (349 aa).

The next 3 helical transmembrane spans lie at 20–42 (VMQR…FGWG), 77–99 (SAML…WMIV), and 124–144 (AMAA…TWIA). Thr-185 carries the FMN phosphoryl threonine modification. The next 5 helical transmembrane spans lie at 212 to 232 (STGV…LVLL), 239 to 259 (WHIS…GFLL), 265 to 285 (ASPL…FIAT), 291 to 311 (ATSS…VYII), and 315 to 335 (GGYP…APFI).

This sequence belongs to the NqrB/RnfD family. As to quaternary structure, the complex is composed of six subunits: RnfA, RnfB, RnfC, RnfD, RnfE and RnfG. FMN is required as a cofactor.

Its subcellular location is the cell inner membrane. Functionally, part of a membrane-bound complex that couples electron transfer with translocation of ions across the membrane. The chain is Ion-translocating oxidoreductase complex subunit D from Shewanella baltica (strain OS223).